The sequence spans 148 residues: UPF0260 protein YPK_2117 (148 aa).

This sequence belongs to the UPF0260 family.

The protein is UPF0260 protein YPK_2117 of Yersinia pseudotuberculosis serotype O:3 (strain YPIII).